The following is a 187-amino-acid chain: Plasmodium-specific hydrophobic abundant protein (187 aa).

The first 18 residues, 1–18 (MMKYVFVALCLFAVVALA), serve as a signal peptide directing secretion.

It to HAP-S protein.

It localises to the membrane. The sequence is that of Plasmodium-specific hydrophobic abundant protein from Physarum polycephalum (Slime mold).